The chain runs to 380 residues: Pregnancy-associated glycoprotein 4 (380 aa).

The signal sequence occupies residues 1-15; it reads MKWLVLLGLVAFSEC. Positions 16–53 are cleaved as a propeptide — activation peptide; it reads IFKIPLRRVKTMRKTLSGKNMLNDVLKEHPYRLPQISF. The Peptidase A1 domain maps to 71–377; it reads YVGNITIGTP…DRGNDRIGLA (307 aa). Asn74 is a glycosylation site (N-linked (GlcNAc...) asparagine). Asp89 is a catalytic residue. Cys102 and Cys107 form a disulfide bridge. N-linked (GlcNAc...) asparagine glycosylation is present at Asn125. Cys261 and Cys265 form a disulfide bridge. Asp270 is a catalytic residue. Cys303 and Cys337 form a disulfide bridge.

Belongs to the peptidase A1 family. In terms of tissue distribution, trophoblast and placental tissue. Produced specifically in the invasive binucleate cells of the placenta.

It is found in the secreted. Its subcellular location is the extracellular space. This chain is Pregnancy-associated glycoprotein 4, found in Ovis aries (Sheep).